The sequence spans 378 residues: MAKRDYYEVLGVAKNASDDEIKKAYRKLAMKYHPDRNPDSKDAEEHFKEAKEAYEMLSDGQKRAAYDQYGHAGVDPNMGGAGGQGFGGFADAFGDIFGDIFGQAAGGAARGGRGGPQVYRGADLRYSMEITLEQAAHGYDTQIRVPSWVSCEVCHGSGAKPGTKPETCPTCHGQGTVRMSQGFFSIQQTCPKCHGTGTYIPEPCVHCHGSGKVKETKTLEVKIPAGIDDGMRIRSAGNGEPGINGGPPGDLYVEIHIKPHSVFERDGDDLHCQMPIPFTTAALGGEIEVPTLAGRASFPVPEGTQSGKTFRLRGKGIKGLRSSIAGDLYVHVQVETPVKLTDQQRDLLKQFEKSLAEGGARHSPQSKSWFDRVKSFFE.

The J domain occupies 5–70 (DYYEVLGVAK…QKRAAYDQYG (66 aa)). The CR-type zinc-finger motif lies at 138 to 216 (GYDTQIRVPS…CHGSGKVKET (79 aa)). Positions 151, 154, 168, 171, 190, 193, 204, and 207 each coordinate Zn(2+). CXXCXGXG motif repeat units lie at residues 151–158 (CEVCHGSG), 168–175 (CPTCHGQG), 190–197 (CPKCHGTG), and 204–211 (CVHCHGSG).

Belongs to the DnaJ family. In terms of assembly, homodimer. Zn(2+) is required as a cofactor.

It localises to the cytoplasm. Functionally, participates actively in the response to hyperosmotic and heat shock by preventing the aggregation of stress-denatured proteins and by disaggregating proteins, also in an autonomous, DnaK-independent fashion. Unfolded proteins bind initially to DnaJ; upon interaction with the DnaJ-bound protein, DnaK hydrolyzes its bound ATP, resulting in the formation of a stable complex. GrpE releases ADP from DnaK; ATP binding to DnaK triggers the release of the substrate protein, thus completing the reaction cycle. Several rounds of ATP-dependent interactions between DnaJ, DnaK and GrpE are required for fully efficient folding. Also involved, together with DnaK and GrpE, in the DNA replication of plasmids through activation of initiation proteins. The protein is Chaperone protein DnaJ of Burkholderia ambifaria (strain MC40-6).